The following is a 327-amino-acid chain: CDPTFILDCAPCNVICSIIFQNRFDYTDQDFLTLLEKFHENLNILSSPWIQVCNNFPALIDYSPGIHNKLLKNIAYLKSYVLKKVKEHQESLDINNPRDFIDCFLIKMEQEKHNQQSEYTIENLIATVSDMFSAGTETTSTTMRYGLLLLLKHPEVTAKVQEEIDRVIGRHRSACMQDRSHMPYTDAVVHEIQRYIDLVPTNLPHAVTCDIKFRNYLIPKGTTILTSLTSVLYDCKAFPNPEVFDPGHFLDESGNFKKSDYFMPFSTGKRICVGEGLARMELFLFLTTILQKFNLKSVVDPKDIDTTPVANGFASVPPFYQICFIPL.

Residue C272 coordinates heme.

This sequence belongs to the cytochrome P450 family. Heme serves as cofactor.

The protein localises to the endoplasmic reticulum membrane. Its subcellular location is the microsome membrane. The catalysed reaction is an organic molecule + reduced [NADPH--hemoprotein reductase] + O2 = an alcohol + oxidized [NADPH--hemoprotein reductase] + H2O + H(+). Cytochromes P450 are a group of heme-thiolate monooxygenases. In liver microsomes, this enzyme is involved in an NADPH-dependent electron transport pathway. It oxidizes a variety of structurally unrelated compounds, including steroids, fatty acids, and xenobiotics. In Sus scrofa (Pig), this protein is Cytochrome P450 2C42 (CYP2C42).